A 122-amino-acid chain; its full sequence is Large ribosomal subunit protein uL18 (122 aa).

This sequence belongs to the universal ribosomal protein uL18 family. In terms of assembly, part of the 50S ribosomal subunit; part of the 5S rRNA/L5/L18/L25 subcomplex. Contacts the 5S and 23S rRNAs.

In terms of biological role, this is one of the proteins that bind and probably mediate the attachment of the 5S RNA into the large ribosomal subunit, where it forms part of the central protuberance. This is Large ribosomal subunit protein uL18 from Dictyoglomus thermophilum (strain ATCC 35947 / DSM 3960 / H-6-12).